The following is a 98-amino-acid chain: Sm-like protein LSM8 (98 aa).

In terms of domain architecture, Sm spans 2–78; that stretch reads AATTGLETLV…IGVIGELDEE (77 aa).

It belongs to the snRNP Sm proteins family. Component of the heptameric LSM2-LSM8 complex that forms a seven-membered ring structure with a donut shape. The LSM subunits are arranged in the order LSM8, LSM2, LSM3, LSM6, LSM5, LSM7 and LSM4. LSM8 subunit interacts only with its two neighboring subunits, LSM2 and LSM4. Interacts with the prefoldin co-chaperone subunits PFD1, PFD2, PFD3, PFD4, PFD5 and PFD6. In terms of tissue distribution, expressed in roots, leaves, stems, flowers and siliques.

Its subcellular location is the nucleus. Functionally, component of the nuclear LSM2-LSM8 complex which is involved splicing nuclear mRNAs. LSM2-LSM8 binds directly to the U6 small nuclear RNAs (snRNAs). LSM8 is essential for the formation of the nuclear LSM2-LSM8 complex involved in the accurate splicing of selected development-related mRNAs through the stabilization of the spliceosomal U6 snRNA. Plays a critical role in the regulation of development-related gene expression. The polypeptide is Sm-like protein LSM8 (Arabidopsis thaliana (Mouse-ear cress)).